The sequence spans 94 residues: Large ribosomal subunit protein bL27 (94 aa).

Positions 1–9 are excised as a propeptide; sequence MLRLDLQFF.

This sequence belongs to the bacterial ribosomal protein bL27 family. The N-terminus is cleaved by ribosomal processing cysteine protease Prp.

In Bacillus velezensis (strain DSM 23117 / BGSC 10A6 / LMG 26770 / FZB42) (Bacillus amyloliquefaciens subsp. plantarum), this protein is Large ribosomal subunit protein bL27.